Reading from the N-terminus, the 432-residue chain is Glutamyl-tRNA reductase (432 aa).

Substrate is bound by residues 49–52 (TCNR), Ser-101, 106–108 (EPQ), and Gln-112. The active-site Nucleophile is Cys-50. 181–186 (GAGETI) lines the NADP(+) pocket. The interval 407–432 (FPEKPGYQHPPIATPIVRTDDADPAP) is disordered.

The protein belongs to the glutamyl-tRNA reductase family. In terms of assembly, homodimer.

It carries out the reaction (S)-4-amino-5-oxopentanoate + tRNA(Glu) + NADP(+) = L-glutamyl-tRNA(Glu) + NADPH + H(+). It participates in porphyrin-containing compound metabolism; protoporphyrin-IX biosynthesis; 5-aminolevulinate from L-glutamyl-tRNA(Glu): step 1/2. Functionally, catalyzes the NADPH-dependent reduction of glutamyl-tRNA(Glu) to glutamate 1-semialdehyde (GSA). The polypeptide is Glutamyl-tRNA reductase (Xanthomonas oryzae pv. oryzae (strain MAFF 311018)).